Reading from the N-terminus, the 673-residue chain is Methionine--tRNA ligase (673 aa).

The 'HIGH' region signature appears at 14-24 (YYPSGKLHIGN). Positions 310 to 314 (KMSKS) match the 'KMSKS' region motif. Lys313 is a binding site for ATP. The region spanning 571–673 (VFDKVELKVA…SEAPNGSSIS (103 aa)) is the tRNA-binding domain.

It belongs to the class-I aminoacyl-tRNA synthetase family. MetG type 2B subfamily. In terms of assembly, homodimer.

The protein resides in the cytoplasm. It catalyses the reaction tRNA(Met) + L-methionine + ATP = L-methionyl-tRNA(Met) + AMP + diphosphate. In terms of biological role, is required not only for elongation of protein synthesis but also for the initiation of all mRNA translation through initiator tRNA(fMet) aminoacylation. The polypeptide is Methionine--tRNA ligase (metG) (Oceanobacillus iheyensis (strain DSM 14371 / CIP 107618 / JCM 11309 / KCTC 3954 / HTE831)).